The primary structure comprises 727 residues: Probable copper-importing P-type ATPase A (727 aa).

Residues 1 to 94 (MATNTKMETF…QTYLRKMKFD (94 aa)) lie on the Cytoplasmic side of the membrane. The 65-residue stretch at 6-70 (KMETFVITGM…SVENIGYGAI (65 aa)) folds into the HMA domain. Cu(+)-binding residues include C17 and C20. A helical membrane pass occupies residues 95–115 (LIFSAILTLPLMLAMIAMMLG). Residues 116 to 119 (SHGP) lie on the Extracellular side of the membrane. A helical transmembrane segment spans residues 120–137 (IVSFFHLSLVQLLFALPV). Residues 138–161 (QFYVGWRFYKGAYHALKTKAPNMD) lie on the Cytoplasmic side of the membrane. A helical transmembrane segment spans residues 162-181 (VLVAIGTSAAFALSIYNGFF). Residues 182–187 (PSHSHD) are Extracellular-facing. The chain crosses the membrane as a helical span at residues 188–203 (LYFESSSMIITLILLG). Residues 204–341 (KYLEHTAKSK…PIQQIADKIS (138 aa)) are Cytoplasmic-facing. The helical transmembrane segment at 342–362 (GIFVPIVLFLALVTLLVTGWL) threads the bilayer. The Extracellular segment spans residues 363–375 (TKDWQLALLHSVS). The helical transmembrane segment at 376–396 (VLVIACPCALGLATPTAIMVG) threads the bilayer. Topologically, residues 397-678 (TGVGAHNGIL…AATLKKIKQN (282 aa)) are cytoplasmic. Residue D425 is the 4-aspartylphosphate intermediate of the active site. D621 and D625 together coordinate Mg(2+). The chain crosses the membrane as a helical span at residues 679 to 698 (LFWAFIYNTIGIPFAAFGFL). The Extracellular portion of the chain corresponds to 699-700 (NP). Residues 701–721 (IIAGGAMAFSSISVLLNSLSL) traverse the membrane as a helical segment. Topologically, residues 722–727 (NRKTIK) are cytoplasmic.

This sequence belongs to the cation transport ATPase (P-type) (TC 3.A.3) family. Type IB subfamily. As to quaternary structure, monomer. Interacts with the copper chaperone CopZ.

The protein localises to the cell membrane. It carries out the reaction Cu(+)(in) + ATP + H2O = Cu(+)(out) + ADP + phosphate + H(+). Inhibited by vanadate. Its function is as follows. Probably involved in copper import under copper limiting conditions. This Enterococcus hirae (strain ATCC 9790 / DSM 20160 / JCM 8729 / LMG 6399 / NBRC 3181 / NCIMB 6459 / NCDO 1258 / NCTC 12367 / WDCM 00089 / R) protein is Probable copper-importing P-type ATPase A (copA).